Consider the following 101-residue polypeptide: Putative UPF0377 protein YBL108W (101 aa).

This sequence belongs to the UPF0377 family.

This chain is Putative UPF0377 protein YBL108W, found in Saccharomyces cerevisiae (strain ATCC 204508 / S288c) (Baker's yeast).